We begin with the raw amino-acid sequence, 373 residues long: Nodulation protein NolL (373 aa).

9 helical membrane-spanning segments follow: residues 27-47, 62-82, 98-118, 140-160, 164-184, 212-232, 253-273, 286-306, and 324-344; these read DFAKGILITLVIIGHLLQYLI, SIYMFHMPLFMAISGYLSSGA, QLLLPMLFWCTLIWTLKSAVI, WFIWAAFISFILIRVLTTFNR, WIISASAIAVAFAPITLSITP, RYKWIFVVLLSIAAFICFLGW, QVFLMFSGSLAASAVAMQSMF, RFVAVQLGQSTLLLYLVQGAV, and RITFATVLGVAIVVIAMAIRS.

The protein belongs to the acyltransferase 3 family.

The protein localises to the cell membrane. In terms of biological role, thought to be an acetyltransferase that modifies the fucose of the nod factor. This chain is Nodulation protein NolL (nolL), found in Mesorhizobium japonicum (strain LMG 29417 / CECT 9101 / MAFF 303099) (Mesorhizobium loti (strain MAFF 303099)).